The primary structure comprises 406 residues: Tryptophan synthase beta chain (406 aa).

Position 99 is an N6-(pyridoxal phosphate)lysine (lysine 99).

Belongs to the TrpB family. As to quaternary structure, tetramer of two alpha and two beta chains. It depends on pyridoxal 5'-phosphate as a cofactor.

The enzyme catalyses (1S,2R)-1-C-(indol-3-yl)glycerol 3-phosphate + L-serine = D-glyceraldehyde 3-phosphate + L-tryptophan + H2O. Its pathway is amino-acid biosynthesis; L-tryptophan biosynthesis; L-tryptophan from chorismate: step 5/5. Its function is as follows. The beta subunit is responsible for the synthesis of L-tryptophan from indole and L-serine. The sequence is that of Tryptophan synthase beta chain (trpB) from Agrobacterium fabrum (strain C58 / ATCC 33970) (Agrobacterium tumefaciens (strain C58)).